The following is a 305-amino-acid chain: Protoheme IX farnesyltransferase (305 aa).

9 helical membrane-spanning segments follow: residues 31-51 (VISL…YSVH), 52-72 (PFIA…AGAI), 96-118 (VIES…FFMA), 123-145 (LLAS…IWLK), 151-171 (NIVI…AAVS), 179-199 (IILF…LALF), 225-245 (ILIY…IGMN), 247-267 (FIYL…AGSL), and 281-301 (FAYS…TNTI).

Belongs to the UbiA prenyltransferase family. Protoheme IX farnesyltransferase subfamily.

It is found in the cell inner membrane. It carries out the reaction heme b + (2E,6E)-farnesyl diphosphate + H2O = Fe(II)-heme o + diphosphate. It functions in the pathway porphyrin-containing compound metabolism; heme O biosynthesis; heme O from protoheme: step 1/1. In terms of biological role, converts heme B (protoheme IX) to heme O by substitution of the vinyl group on carbon 2 of heme B porphyrin ring with a hydroxyethyl farnesyl side group. This is Protoheme IX farnesyltransferase from Rickettsia massiliae (strain Mtu5).